The chain runs to 375 residues: uncharacterized protein (375 aa).

This is an uncharacterized protein from Ureaplasma parvum serovar 3 (strain ATCC 700970).